The chain runs to 324 residues: Putative ribose-phosphate pyrophosphokinase 2 (324 aa).

Residues 43-45 (DGE) and 102-103 (RQ) each bind ATP. H136 serves as a coordination point for Mg(2+). Residues D225 and 229–233 (NTGKT) each bind D-ribose 5-phosphate.

It belongs to the ribose-phosphate pyrophosphokinase family. Class I subfamily. As to quaternary structure, homohexamer. The cofactor is Mg(2+).

Its subcellular location is the cytoplasm. The enzyme catalyses D-ribose 5-phosphate + ATP = 5-phospho-alpha-D-ribose 1-diphosphate + AMP + H(+). It participates in metabolic intermediate biosynthesis; 5-phospho-alpha-D-ribose 1-diphosphate biosynthesis; 5-phospho-alpha-D-ribose 1-diphosphate from D-ribose 5-phosphate (route I): step 1/1. Its function is as follows. Involved in the biosynthesis of the central metabolite phospho-alpha-D-ribosyl-1-pyrophosphate (PRPP) via the transfer of pyrophosphoryl group from ATP to 1-hydroxyl of ribose-5-phosphate (Rib-5-P). The sequence is that of Putative ribose-phosphate pyrophosphokinase 2 from Streptococcus agalactiae serotype III (strain NEM316).